An 820-amino-acid polypeptide reads, in one-letter code: Disintegrin and metalloproteinase domain-containing protein 29 (820 aa).

An N-terminal signal peptide occupies residues 1–18; the sequence is MKMLLLLHCLGVFLSCSG. A propeptide spanning residues 19–193 is cleaved from the precursor; it reads HIQDEHPQYH…TQKQSSYVGW (175 aa). Residues 194-674 are Extracellular-facing; it reads WIHFRIVEIV…GPPPKRKKKK (481 aa). The Peptidase M12B domain maps to 198–390; that stretch reads RIVEIVVVID…RTKCLLETVH (193 aa). N-linked (GlcNAc...) asparagine glycans are attached at residues N217 and N320. 3 cysteine pairs are disulfide-bonded: C307–C384, C347–C369, and C349–C354. N368, N428, N469, N538, N545, N558, and N564 each carry an N-linked (GlcNAc...) asparagine glycan. Residues 397–483 enclose the Disintegrin domain; the sequence is VKRCGNGVVE…KCPDDFYVED (87 aa). Cysteines 455 and 475 form a disulfide. Disulfide bonds link C625–C636, C630–C642, and C644–C653. The EGF-like domain maps to 625 to 654; that stretch reads CSPAFCNKRGICNNKHHCHCNYLWDPPNCL. A helical transmembrane segment spans residues 675 to 695; that stretch reads KFCYLCILLLIVLFILLCCLY. Residues 696-820 are Cytoplasmic-facing; sequence RLCKKSKPIK…SQSQPPVTPS (125 aa). Residues 706–820 are disordered; it reads KQQDVQTPSA…SQSQPPVTPS (115 aa). Basic and acidic residues predominate over residues 715–727; the sequence is AKEEEKIQRRPHE. A compositionally biased stretch (low complexity) spans 738 to 820; that stretch reads PSQSQPPVTP…SQSQPPVTPS (83 aa). 9 tandem repeats follow at residues 739–747, 748–756, 757–765, 766–774, 775–783, 784–792, 793–801, 802–810, and 811–819. The segment at 739 to 819 is 9 X 9 AA approximate repeats; it reads SQSQPPVTPS…PSQSQPPVTP (81 aa).

As to expression, expressed specifically in testes.

It is found in the membrane. In terms of biological role, may be involved in spermatogenesis and fertilization. Seems to be a non catalytic metalloprotease-like protein. The chain is Disintegrin and metalloproteinase domain-containing protein 29 (ADAM29) from Homo sapiens (Human).